The chain runs to 1386 residues: DNA-directed RNA polymerase subunit beta (1386 aa).

Belongs to the RNA polymerase beta chain family. In terms of assembly, in plastids the minimal PEP RNA polymerase catalytic core is composed of four subunits: alpha, beta, beta', and beta''. When a (nuclear-encoded) sigma factor is associated with the core the holoenzyme is formed, which can initiate transcription.

Its subcellular location is the plastid. It is found in the chloroplast. The catalysed reaction is RNA(n) + a ribonucleoside 5'-triphosphate = RNA(n+1) + diphosphate. Functionally, DNA-dependent RNA polymerase catalyzes the transcription of DNA into RNA using the four ribonucleoside triphosphates as substrates. The protein is DNA-directed RNA polymerase subunit beta of Thalassiosira pseudonana (Marine diatom).